A 445-amino-acid polypeptide reads, in one-letter code: RNA pseudouridine synthase 2, chloroplastic (445 aa).

A chloroplast-targeting transit peptide spans 1 to 44; that stretch reads MATTAAASPPAIATALSALLRRQRRRSSRCVGASHARCLAADAN. The segment at 47-66 is disordered; sequence AVAPSRRGGHGGTRLEEAVP. Residues 72-147 form the S4 RNA-binding domain; the sequence is SRIDAWISAR…IPLDIVYEDD (76 aa). Residue Asp-235 is part of the active site.

It belongs to the pseudouridine synthase RluA family.

The protein localises to the plastid. It is found in the chloroplast. The catalysed reaction is a uridine in RNA = a pseudouridine in RNA. This is RNA pseudouridine synthase 2, chloroplastic from Oryza sativa subsp. japonica (Rice).